The primary structure comprises 100 residues: MTPPPTQPGDRRGGLLGTLAVVGVALLPIICCAGPVLLASGALAGLGGVLVSPWLLAPAAVLLAGALTWWLRRRRTGNGDACCLPAPRTDQHDRDLLRKQ.

2 helical membrane passes run 19 to 39 (LAVV…VLLA) and 43 to 63 (LAGL…AVLL). The Hg(2+) site is built by C31 and C32. Residues C82 and C83 each coordinate Hg(2+).

It is found in the cell membrane. Involved in mercuric transport. Passes a mercury ion from the MerP protein to the mercuric reductase MerA. The sequence is that of Mercuric transport protein (merT) from Streptomyces lividans.